The sequence spans 463 residues: L-seryl-tRNA(Sec) selenium transferase (463 aa).

At lysine 295 the chain carries N6-(pyridoxal phosphate)lysine.

It belongs to the SelA family. As to quaternary structure, homodecamer; pentamer of dimers. Binds only one seryl-tRNA(Sec) per dimer. It depends on pyridoxal 5'-phosphate as a cofactor.

It localises to the cytoplasm. It catalyses the reaction L-seryl-tRNA(Sec) + selenophosphate + H(+) = L-selenocysteinyl-tRNA(Sec) + phosphate. It participates in aminoacyl-tRNA biosynthesis; selenocysteinyl-tRNA(Sec) biosynthesis; selenocysteinyl-tRNA(Sec) from L-seryl-tRNA(Sec) (bacterial route): step 1/1. Functionally, converts seryl-tRNA(Sec) to selenocysteinyl-tRNA(Sec) required for selenoprotein biosynthesis. This chain is L-seryl-tRNA(Sec) selenium transferase, found in Shigella flexneri.